Reading from the N-terminus, the 311-residue chain is Mitochondrial ribosome-associated GTPase 1 (311 aa).

The CP-type G domain occupies 27–200; that stretch reads AKGLKQMKTK…LFDTPGVLSP (174 aa). GTP contacts are provided by residues 74-77, 144-149, and glycine 196; these read NKMD and NVGKSS.

This sequence belongs to the TRAFAC class YlqF/YawG GTPase family. MTG1 subfamily.

It localises to the mitochondrion inner membrane. Plays a role in the regulation of the mitochondrial ribosome assembly and of translational activity. Displays mitochondrial GTPase activity. The protein is Mitochondrial ribosome-associated GTPase 1 of Xenopus tropicalis (Western clawed frog).